Reading from the N-terminus, the 577-residue chain is Arginine--tRNA ligase (577 aa).

A 'HIGH' region motif is present at residues 122-132; sequence PNVAKEMHVGH.

This sequence belongs to the class-I aminoacyl-tRNA synthetase family. As to quaternary structure, monomer.

It is found in the cytoplasm. The enzyme catalyses tRNA(Arg) + L-arginine + ATP = L-arginyl-tRNA(Arg) + AMP + diphosphate. The protein is Arginine--tRNA ligase of Salmonella dublin (strain CT_02021853).